Here is a 372-residue protein sequence, read N- to C-terminus: Probable inactive receptor-like protein kinase At1g65250 (372 aa).

Residues M1–L4 and K38 each bind ATP. Residues M1 to L314 enclose the Protein kinase domain. Phosphotyrosine is present on residues Y128 and Y221. Residues S348–N372 form a disordered region. The span at G354 to N372 shows a compositional bias: polar residues.

The protein belongs to the protein kinase superfamily.

This chain is Probable inactive receptor-like protein kinase At1g65250, found in Arabidopsis thaliana (Mouse-ear cress).